A 238-amino-acid chain; its full sequence is Ribonuclease PH (238 aa).

Residues arginine 86 and 124–126 (GTR) contribute to the phosphate site.

It belongs to the RNase PH family. In terms of assembly, homohexameric ring arranged as a trimer of dimers.

It carries out the reaction tRNA(n+1) + phosphate = tRNA(n) + a ribonucleoside 5'-diphosphate. Functionally, phosphorolytic 3'-5' exoribonuclease that plays an important role in tRNA 3'-end maturation. Removes nucleotide residues following the 3'-CCA terminus of tRNAs; can also add nucleotides to the ends of RNA molecules by using nucleoside diphosphates as substrates, but this may not be physiologically important. Probably plays a role in initiation of 16S rRNA degradation (leading to ribosome degradation) during starvation. The polypeptide is Ribonuclease PH (Haemophilus influenzae (strain 86-028NP)).